A 468-amino-acid chain; its full sequence is ERO1-like protein alpha (468 aa).

The N-terminal stretch at 1-23 (MGRGWGFLFGLLGAVWLLSSGHG) is a signal peptide. Cystine bridges form between C35–C48, C37–C46, C85–C391, C94–C99, C94–C131, C99–C104, C208–C241, and C394–C397. Residues S106 and S143 each carry the phosphoserine modification. Phosphoserine; by FAM20C is present on S145. Residues R187, T189, and W200 each contribute to the FAD site. Residues S252 and H255 each coordinate FAD. A glycan (N-linked (GlcNAc...) asparagine) is linked at N280. The FAD site is built by R287 and R300. N384 carries N-linked (GlcNAc...) asparagine glycosylation.

The protein belongs to the EROs family. Predominantly monomer. May function both as a monomer and a homodimer. Interacts with PDILT. Interacts with ERP44; the interaction results in retention of ERO1A in the endoplasmic reticulum. Requires FAD as cofactor. In terms of processing, N-glycosylated. The Cys-94/Cys-99 and Cys-394/Cys-397 disulfide bonds constitute the redox-active center. The Cys-94/Cys-99 disulfide bond may accept electron from P4HB and funnel them to the active site disulfide Cys-394/Cys-397. The regulatory Cys-99/Cys-104 disulfide bond stabilizes the other regulatory bond Cys-94/Cys-131. Post-translationally, phosphorylated on Ser-145 by FAM20C in the Golgi which increases its enzymatic activity. Phosphorylation is induced by lactation. It is also induced by hypoxia and reductive stress. As to expression, widely expressed at low level. Expressed at high level in upper digestive tract. Highly expressed in esophagus. Weakly expressed in stomach and duodenum.

The protein localises to the endoplasmic reticulum membrane. Its subcellular location is the golgi apparatus lumen. It is found in the secreted. It localises to the cell projection. The protein resides in the dendrite. Enzyme activity is tightly regulated to prevent the accumulation of reactive oxygen species in the endoplasmic reticulum. Reversibly down-regulated by the formation of disulfide bonds between the active site Cys-94 and Cys-131, and between Cys-99 and Cys-104. Glutathione may be required to regulate its activity in the endoplasmic reticulum. Its function is as follows. Oxidoreductase involved in disulfide bond formation in the endoplasmic reticulum. Efficiently reoxidizes P4HB/PDI, the enzyme catalyzing protein disulfide formation, in order to allow P4HB to sustain additional rounds of disulfide formation. Following P4HB reoxidation, passes its electrons to molecular oxygen via FAD, leading to the production of reactive oxygen species (ROS) in the cell. Required for the proper folding of immunoglobulins. Plays an important role in ER stress-induced, CHOP-dependent apoptosis by activating the inositol 1,4,5-trisphosphate receptor IP3R1. Involved in the release of the unfolded cholera toxin from reduced P4HB/PDI in case of infection by V.cholerae, thereby playing a role in retrotranslocation of the toxin. This chain is ERO1-like protein alpha, found in Homo sapiens (Human).